A 273-amino-acid chain; its full sequence is 4-hydroxy-tetrahydrodipicolinate reductase (273 aa).

NAD(+) is bound by residues Gly-12–Met-17 and Glu-38. Arg-39 is a binding site for NADP(+). NAD(+) is bound by residues Gly-102–Thr-104 and Ala-126–Phe-129. The active-site Proton donor/acceptor is the His-159. His-160 serves as a coordination point for (S)-2,3,4,5-tetrahydrodipicolinate. The Proton donor role is filled by Lys-163. Gly-169–Thr-170 serves as a coordination point for (S)-2,3,4,5-tetrahydrodipicolinate.

It belongs to the DapB family. Homotetramer.

The protein localises to the cytoplasm. It carries out the reaction (S)-2,3,4,5-tetrahydrodipicolinate + NAD(+) + H2O = (2S,4S)-4-hydroxy-2,3,4,5-tetrahydrodipicolinate + NADH + H(+). The catalysed reaction is (S)-2,3,4,5-tetrahydrodipicolinate + NADP(+) + H2O = (2S,4S)-4-hydroxy-2,3,4,5-tetrahydrodipicolinate + NADPH + H(+). Its pathway is amino-acid biosynthesis; L-lysine biosynthesis via DAP pathway; (S)-tetrahydrodipicolinate from L-aspartate: step 4/4. Catalyzes the conversion of 4-hydroxy-tetrahydrodipicolinate (HTPA) to tetrahydrodipicolinate. The protein is 4-hydroxy-tetrahydrodipicolinate reductase of Escherichia coli O127:H6 (strain E2348/69 / EPEC).